A 444-amino-acid chain; its full sequence is Proline--tRNA ligase (444 aa).

It belongs to the class-II aminoacyl-tRNA synthetase family. ProS type 2 subfamily. In terms of assembly, homodimer.

It localises to the cytoplasm. It carries out the reaction tRNA(Pro) + L-proline + ATP = L-prolyl-tRNA(Pro) + AMP + diphosphate. Functionally, catalyzes the attachment of proline to tRNA(Pro) in a two-step reaction: proline is first activated by ATP to form Pro-AMP and then transferred to the acceptor end of tRNA(Pro). The sequence is that of Proline--tRNA ligase from Maricaulis maris (strain MCS10) (Caulobacter maris).